The sequence spans 338 residues: Glycerol-3-phosphate dehydrogenase [NAD(P)+] (338 aa).

4 residues coordinate NADPH: serine 14, tyrosine 15, histidine 35, and lysine 109. Lysine 109, glycine 138, and threonine 140 together coordinate sn-glycerol 3-phosphate. Residue alanine 142 coordinates NADPH. 5 residues coordinate sn-glycerol 3-phosphate: lysine 194, aspartate 247, serine 257, arginine 258, and asparagine 259. Lysine 194 acts as the Proton acceptor in catalysis. Arginine 258 provides a ligand contact to NADPH. Residues valine 282 and glutamate 284 each contribute to the NADPH site.

It belongs to the NAD-dependent glycerol-3-phosphate dehydrogenase family.

The protein localises to the cytoplasm. The catalysed reaction is sn-glycerol 3-phosphate + NAD(+) = dihydroxyacetone phosphate + NADH + H(+). It carries out the reaction sn-glycerol 3-phosphate + NADP(+) = dihydroxyacetone phosphate + NADPH + H(+). It participates in membrane lipid metabolism; glycerophospholipid metabolism. In terms of biological role, catalyzes the reduction of the glycolytic intermediate dihydroxyacetone phosphate (DHAP) to sn-glycerol 3-phosphate (G3P), the key precursor for phospholipid synthesis. This is Glycerol-3-phosphate dehydrogenase [NAD(P)+] from Shewanella oneidensis (strain ATCC 700550 / JCM 31522 / CIP 106686 / LMG 19005 / NCIMB 14063 / MR-1).